The sequence spans 391 residues: Chorismate synthase (391 aa).

Arg-48 is a binding site for NADP(+). FMN contacts are provided by residues 126 to 128 (RAS), Gly-286, 301 to 305 (KPTSS), and Arg-328.

It belongs to the chorismate synthase family. Requires FMNH2 as cofactor.

The enzyme catalyses 5-O-(1-carboxyvinyl)-3-phosphoshikimate = chorismate + phosphate. The protein operates within metabolic intermediate biosynthesis; chorismate biosynthesis; chorismate from D-erythrose 4-phosphate and phosphoenolpyruvate: step 7/7. Its function is as follows. Catalyzes the anti-1,4-elimination of the C-3 phosphate and the C-6 proR hydrogen from 5-enolpyruvylshikimate-3-phosphate (EPSP) to yield chorismate, which is the branch point compound that serves as the starting substrate for the three terminal pathways of aromatic amino acid biosynthesis. This reaction introduces a second double bond into the aromatic ring system. This Saccharolobus solfataricus (strain ATCC 35092 / DSM 1617 / JCM 11322 / P2) (Sulfolobus solfataricus) protein is Chorismate synthase.